Here is a 606-residue protein sequence, read N- to C-terminus: DNA mismatch repair protein MutL (606 aa).

The segment at 377–401 is disordered; it reads HRPLFAPQPAPQPDREPPLPDSGSR.

This sequence belongs to the DNA mismatch repair MutL/HexB family.

In terms of biological role, this protein is involved in the repair of mismatches in DNA. It is required for dam-dependent methyl-directed DNA mismatch repair. May act as a 'molecular matchmaker', a protein that promotes the formation of a stable complex between two or more DNA-binding proteins in an ATP-dependent manner without itself being part of a final effector complex. The sequence is that of DNA mismatch repair protein MutL from Geobacter sulfurreducens (strain ATCC 51573 / DSM 12127 / PCA).